We begin with the raw amino-acid sequence, 263 residues long: Tropinone reductase homolog At2g29300 (263 aa).

13–37 (LVTGAASGIGYAIVEELAGFGARIH) is an NADP(+) binding site. Residue Ser146 participates in substrate binding. Catalysis depends on Tyr160, which acts as the Proton acceptor.

The protein belongs to the short-chain dehydrogenases/reductases (SDR) family. SDR65C subfamily.

The protein is Tropinone reductase homolog At2g29300 of Arabidopsis thaliana (Mouse-ear cress).